We begin with the raw amino-acid sequence, 576 residues long: Arginine--tRNA ligase (576 aa).

Residues 122-132 (PNVAKEMHVGH) carry the 'HIGH' region motif.

It belongs to the class-I aminoacyl-tRNA synthetase family. As to quaternary structure, monomer.

It localises to the cytoplasm. The catalysed reaction is tRNA(Arg) + L-arginine + ATP = L-arginyl-tRNA(Arg) + AMP + diphosphate. This Photobacterium profundum (strain SS9) protein is Arginine--tRNA ligase.